The chain runs to 1637 residues: Endoribonuclease Dicer homolog 3b (1637 aa).

The segment at 1 to 40 (MADDEAAVLPPPPPLPPPCRPHRQLRPRGSRPTADTTPRT) is disordered. The segment covering 9 to 19 (LPPPPPLPPPC) has biased composition (pro residues). Residues 20-29 (RPHRQLRPRG) are compositionally biased toward basic residues. In terms of domain architecture, Helicase ATP-binding spans 46–222 (VFEAALRGNT…LHNCEAHISQ (177 aa)). 59 to 66 (LDTGSGKT) contributes to the ATP binding site. A DECH box motif is present at residues 169–172 (DECH). The Helicase C-terminal domain occupies 404-556 (SFGSSNEVLC…ALYRHPNALS (153 aa)). The Dicer dsRNA-binding fold domain occupies 581–671 (CVNLIRKYCE…VPLTEEPMDT (91 aa)). The PAZ domain occupies 882-1006 (EIIHLANKSL…VPPELLIHLD (125 aa)). One can recognise an RNase III 1 domain in the interval 1031–1200 (ASQLRREIGY…LVGAYYVGGG (170 aa)). Mg(2+) contacts are provided by D1214, D1309, and S1312. The 149-residue stretch at 1241 to 1389 (IEELEAKLKY…IAGAVFIDTD (149 aa)) folds into the RNase III 2 domain. DRBM domains follow at residues 1412 to 1481 (LALP…DLKQ) and 1545 to 1629 (GPRS…KLQE).

It belongs to the helicase family. Dicer subfamily. In terms of assembly, may interact with ARGONAUTE1 or PINHEAD through their common PAZ domains. The cofactor is Mg(2+). Mn(2+) serves as cofactor.

The protein localises to the nucleus. Its function is as follows. Probably involved in the RNA silencing pathway. May cleave double-stranded RNA to produce short 21-24 nucleotides (nt) RNAs which target the selective destruction of complementary RNAs. The sequence is that of Endoribonuclease Dicer homolog 3b (DCL3B) from Oryza sativa subsp. japonica (Rice).